The following is a 238-amino-acid chain: Sugar fermentation stimulation protein homolog (238 aa).

It belongs to the SfsA family.

This is Sugar fermentation stimulation protein homolog from Klebsiella pneumoniae subsp. pneumoniae (strain ATCC 700721 / MGH 78578).